Consider the following 100-residue polypeptide: MAKKSMIAREVKRKKLVKKYATKRKSLLDEFNAAKDPMERLEIHRKIQGLPRNSAPTRVRNRCWATGKPRGVYRDFGLCRNQLRLRAHNGELPGVVKSSW.

Belongs to the universal ribosomal protein uS14 family. In terms of assembly, part of the 30S ribosomal subunit. Contacts proteins S3 and S10.

In terms of biological role, binds 16S rRNA, required for the assembly of 30S particles and may also be responsible for determining the conformation of the 16S rRNA at the A site. The protein is Small ribosomal subunit protein uS14 of Prochlorococcus marinus subsp. pastoris (strain CCMP1986 / NIES-2087 / MED4).